The primary structure comprises 437 residues: Eukaryotic peptide chain release factor subunit 1 (437 aa).

The residue at position 2 (A2) is an N-acetylalanine. Residues 61–64 (NIKS) carry the NIKS motif; plays an important role in translational termination motif. K63 is subject to 4-hydroxylysine. K87 participates in a covalent cross-link: Glycyl lysine isopeptide (Lys-Gly) (interchain with G-Cter in SUMO2). Q185 carries the post-translational modification N5-methylglutamine. T347 is modified (phosphothreonine). K404 is covalently cross-linked (Glycyl lysine isopeptide (Lys-Gly) (interchain with G-Cter in SUMO2)).

Belongs to the eukaryotic release factor 1 family. In terms of assembly, component of the eRF1-eRF3-GTP ternary complex, composed of ETF1/ERF1 and eRF3 (GSPT1/ERF3A or GSPT2/ERF3B) and GTP. Component of the transient SURF (SMG1-UPF1-eRF1-eRF3) complex. Interacts with JMJD4. The ETF1-GSPT1 complex interacts with JMJD4. In terms of processing, hydroxylation at Lys-63 by JMJD4 promotes its translational termination efficiency. Methylated at Gln-185 by N6AMT1. Post-translationally, ubiquitinated via 'Lys-6'-linked polyubiquitin chains by RNF14 and RNF25 in response to ribosome collisions (ribosome stalling), leading to its degradation by the proteasome and rescue of stalled ribosomes.

Its subcellular location is the cytoplasm. In terms of biological role, component of the eRF1-eRF3-GTP ternary complex, a ternary complex that mediates translation termination in response to the termination codons. The eRF1-eRF3-GTP complex binds to a stop codon in the ribosomal A-site. ETF1/ERF1 is responsible for stop codon recognition and inducing hydrolysis of peptidyl-tRNA. Following GTP hydrolysis, eRF3 (GSPT1/ERF3A or GSPT2/ERF3B) dissociates, permitting ETF1/eRF1 to accommodate fully in the A-site, followed by hydrolysis of peptidyl-tRNA. Component of the transient SURF complex which recruits UPF1 to stalled ribosomes in the context of nonsense-mediated decay (NMD) of mRNAs containing premature stop codons. Required for SHFL-mediated translation termination which inhibits programmed ribosomal frameshifting (-1PRF) of mRNA from viruses and cellular genes. In Pongo abelii (Sumatran orangutan), this protein is Eukaryotic peptide chain release factor subunit 1 (ETF1).